Consider the following 108-residue polypeptide: Peptidyl-prolyl cis-trans isomerase Fkbp12 (108 aa).

Residues 1-21 (MGVQVVPIAPGDGSTYPKNGQ) form a disordered region. The region spanning 20 to 108 (GQKVTVHYTG…TFDVELLKVE (89 aa)) is the PPIase FKBP-type domain.

The protein belongs to the FKBP-type PPIase family. FKBP1 subfamily.

The protein resides in the cytoplasm. The enzyme catalyses [protein]-peptidylproline (omega=180) = [protein]-peptidylproline (omega=0). PPIases accelerate the folding of proteins. It catalyzes the cis-trans isomerization of proline imidic peptide bonds in oligopeptides. Binds to ligand-free TGF beta type I receptor, from which it is released upon a ligand-induced, type II receptor mediated phosphorylation of the type I receptor. Binding is inhibitory to the signaling pathways of the TGF beta family ligands. In Drosophila melanogaster (Fruit fly), this protein is Peptidyl-prolyl cis-trans isomerase Fkbp12.